A 248-amino-acid chain; its full sequence is MEAPEGGGGGPAARGPEGQPAPEARVHFRVARFIMEAGVKLGMRSIPIATACTIYHKFFCETNLDAYDPYLIAMSSIYLAGKVEEQHLRTRDIINVSNRYFNPSGEPLELDSRFWELRDSIVQCELLMLRVLRFQVSFQHPHKYLLHYLVSLQNWLNRHSWQRTPVAVTAWALLRDSYHGALCLRFQAQHIAVAVLYLALQVYGVEVPAEVEAEKPWWQVFNDDLTKPIIDNIVSDLIQIYTMDTEIP.

Position 1 is an N-acetylmethionine (Met1). A compositionally biased stretch (gly residues) spans Met1–Ala12. Positions Met1 to Ala21 are disordered.

It belongs to the cyclin family. Cyclin-like FAM58 subfamily. In terms of assembly, associates with CDK10 to promote its kinase activity. Interacts with SALL1.

In terms of biological role, activating cyclin for the cyclin-associated kinase CDK10. The polypeptide is Cyclin-Q (Homo sapiens (Human)).